Reading from the N-terminus, the 249-residue chain is Ribonuclease 3 (249 aa).

Residues 20-149 (FKEFQERISV…FIGALYLDQG (130 aa)) enclose the RNase III domain. Position 62 (glutamate 62) interacts with Mg(2+). Aspartate 66 is a catalytic residue. Residues aspartate 135 and glutamate 138 each contribute to the Mg(2+) site. The active site involves glutamate 138. Positions 175–244 (DFKSQLQEFV…AQEALAKMQK (70 aa)) constitute a DRBM domain. Positions 223–249 (NGRSKKEAEQHAAQEALAKMQKHHTKQ) are disordered.

This sequence belongs to the ribonuclease III family. Homodimer. The cofactor is Mg(2+).

It localises to the cytoplasm. It catalyses the reaction Endonucleolytic cleavage to 5'-phosphomonoester.. Its function is as follows. Digests double-stranded RNA. Involved in the processing of primary rRNA transcript to yield the immediate precursors to the large and small rRNAs (23S and 16S). Processes some mRNAs, and tRNAs when they are encoded in the rRNA operon. Processes pre-crRNA and tracrRNA of type II CRISPR loci if present in the organism. This is Ribonuclease 3 from Bacillus velezensis (strain DSM 23117 / BGSC 10A6 / LMG 26770 / FZB42) (Bacillus amyloliquefaciens subsp. plantarum).